A 337-amino-acid chain; its full sequence is Glyceraldehyde-3-phosphate dehydrogenase 3, cytosolic (337 aa).

Residues R13–I14, D35, and R82 contribute to the NAD(+) site. Residues S153–T155, T184, T213–G214, and R236 each bind D-glyceraldehyde 3-phosphate. Catalysis depends on C154, which acts as the Nucleophile. An NAD(+)-binding site is contributed by N318.

Belongs to the glyceraldehyde-3-phosphate dehydrogenase family. In terms of assembly, homotetramer.

The protein localises to the cytoplasm. It catalyses the reaction D-glyceraldehyde 3-phosphate + phosphate + NAD(+) = (2R)-3-phospho-glyceroyl phosphate + NADH + H(+). The protein operates within carbohydrate degradation; glycolysis; pyruvate from D-glyceraldehyde 3-phosphate: step 1/5. Functionally, key enzyme in glycolysis that catalyzes the first step of the pathway by converting D-glyceraldehyde 3-phosphate (G3P) into 3-phospho-D-glyceroyl phosphate. Essential for the maintenance of cellular ATP levels and carbohydrate metabolism. This Oryza sativa subsp. japonica (Rice) protein is Glyceraldehyde-3-phosphate dehydrogenase 3, cytosolic (GAPC3).